A 428-amino-acid chain; its full sequence is Chaperone SurA (428 aa).

Positions 1 to 20 (MKNWKTLLLGIAMIANTSFA) are cleaved as a signal peptide. PpiC domains lie at 171–272 (STEL…KVND) and 282–382 (VTEV…ELLD).

The protein resides in the periplasm. It catalyses the reaction [protein]-peptidylproline (omega=180) = [protein]-peptidylproline (omega=0). Chaperone involved in the correct folding and assembly of outer membrane proteins. Recognizes specific patterns of aromatic residues and the orientation of their side chains, which are found more frequently in integral outer membrane proteins. May act in both early periplasmic and late outer membrane-associated steps of protein maturation. This Escherichia coli O157:H7 protein is Chaperone SurA.